The primary structure comprises 1661 residues: Pentafunctional AROM polypeptide (1661 aa).

The segment at 1 to 388 is 3-dehydroquinate synthase; it reads MATNGVKAEP…YEKKASSVVD (388 aa). Residues 50 to 52, 87 to 90, 118 to 120, and Asp-123 each bind NAD(+); these read DTN, ETSK, and GGV. Arg-134 lines the 7-phospho-2-dehydro-3-deoxy-D-arabino-heptonate pocket. 143-144 is an NAD(+) binding site; it reads TT. Residues Asp-150 and Lys-156 each coordinate 7-phospho-2-dehydro-3-deoxy-D-arabino-heptonate. Lys-165 lines the NAD(+) pocket. A 7-phospho-2-dehydro-3-deoxy-D-arabino-heptonate-binding site is contributed by Asn-166. Residues 183 to 186 and Asn-194 each bind NAD(+); that span reads FLET. Glu-198 provides a ligand contact to Zn(2+). Residues 198-201 and Lys-254 each bind 7-phospho-2-dehydro-3-deoxy-D-arabino-heptonate; that span reads EVVK. Glu-264 (proton acceptor; for 3-dehydroquinate synthase activity) is an active-site residue. Residues 268 to 272 and His-275 each bind 7-phospho-2-dehydro-3-deoxy-D-arabino-heptonate; that span reads RNLLN. Zn(2+) is bound at residue His-275. Catalysis depends on His-279, which acts as the Proton acceptor; for 3-dehydroquinate synthase activity. The 7-phospho-2-dehydro-3-deoxy-D-arabino-heptonate site is built by His-291 and Lys-360. Position 291 (His-291) interacts with Zn(2+). The interval 401–850 is EPSP synthase; it reads VHPGIPSDLN…WDILNQQFKA (450 aa). Cys-832 (for EPSP synthase activity) is an active-site residue. The segment at 872 to 1064 is shikimate kinase; the sequence is QKSIFIIGMR…KKKKQSFFVC (193 aa). 879–886 is a binding site for ATP; that stretch reads GMRGAGKT. The interval 1065-1285 is 3-dehydroquinase; it reads LSAPNLEPCA…TAPGQLSAAD (221 aa). The active-site Proton acceptor; for 3-dehydroquinate dehydratase activity is His-1188. Residue Lys-1216 is the Schiff-base intermediate with substrate; for 3-dehydroquinate dehydratase activity of the active site. Residues 1298-1661 are shikimate dehydrogenase; sequence TKKFCIFGSP…LTYSWSLGDW (364 aa).

The protein in the N-terminal section; belongs to the sugar phosphate cyclases superfamily. Dehydroquinate synthase family. This sequence in the 2nd section; belongs to the EPSP synthase family. It in the 3rd section; belongs to the shikimate kinase family. In the 4th section; belongs to the type-I 3-dehydroquinase family. The protein in the C-terminal section; belongs to the shikimate dehydrogenase family. Homodimer. Requires Zn(2+) as cofactor.

Its subcellular location is the cytoplasm. The enzyme catalyses 7-phospho-2-dehydro-3-deoxy-D-arabino-heptonate = 3-dehydroquinate + phosphate. It catalyses the reaction 3-dehydroquinate = 3-dehydroshikimate + H2O. It carries out the reaction shikimate + NADP(+) = 3-dehydroshikimate + NADPH + H(+). The catalysed reaction is shikimate + ATP = 3-phosphoshikimate + ADP + H(+). The enzyme catalyses 3-phosphoshikimate + phosphoenolpyruvate = 5-O-(1-carboxyvinyl)-3-phosphoshikimate + phosphate. It functions in the pathway metabolic intermediate biosynthesis; chorismate biosynthesis; chorismate from D-erythrose 4-phosphate and phosphoenolpyruvate: step 2/7. It participates in metabolic intermediate biosynthesis; chorismate biosynthesis; chorismate from D-erythrose 4-phosphate and phosphoenolpyruvate: step 3/7. Its pathway is metabolic intermediate biosynthesis; chorismate biosynthesis; chorismate from D-erythrose 4-phosphate and phosphoenolpyruvate: step 4/7. The protein operates within metabolic intermediate biosynthesis; chorismate biosynthesis; chorismate from D-erythrose 4-phosphate and phosphoenolpyruvate: step 5/7. It functions in the pathway metabolic intermediate biosynthesis; chorismate biosynthesis; chorismate from D-erythrose 4-phosphate and phosphoenolpyruvate: step 6/7. Its function is as follows. The AROM polypeptide catalyzes 5 consecutive enzymatic reactions in prechorismate polyaromatic amino acid biosynthesis. The protein is Pentafunctional AROM polypeptide of Phaeosphaeria nodorum (strain SN15 / ATCC MYA-4574 / FGSC 10173) (Glume blotch fungus).